We begin with the raw amino-acid sequence, 299 residues long: NAD kinase (299 aa).

Residue Asp-64 is the Proton acceptor of the active site. NAD(+) contacts are provided by residues Asp-64–Gly-65, Asn-138–Asp-139, Arg-149, Arg-166, Asp-168, Thr-179–Ser-184, and Gln-238.

The protein belongs to the NAD kinase family. The cofactor is a divalent metal cation.

The protein localises to the cytoplasm. It carries out the reaction NAD(+) + ATP = ADP + NADP(+) + H(+). Its function is as follows. Involved in the regulation of the intracellular balance of NAD and NADP, and is a key enzyme in the biosynthesis of NADP. Catalyzes specifically the phosphorylation on 2'-hydroxyl of the adenosine moiety of NAD to yield NADP. The protein is NAD kinase of Nitratidesulfovibrio vulgaris (strain ATCC 29579 / DSM 644 / CCUG 34227 / NCIMB 8303 / VKM B-1760 / Hildenborough) (Desulfovibrio vulgaris).